We begin with the raw amino-acid sequence, 356 residues long: N-methyltransferase 4 (356 aa).

S-adenosyl-L-methionine is bound by residues 93 to 94 (QS), 128 to 136 (ILDIGCGFG), and 155 to 160 (TNSAEQ).

This sequence belongs to the CFA/CMAS family. As to expression, expressed in stems, roots, flower buds and leaves.

Functionally, probable N-methyltransferase not involved in benzylisoquinoline metabolism. Shows no detectable activity with (s)-coclaurine, (R)- or (S)-reticuline, papaverine or (R,S)-tetrahydropapaverine. This is N-methyltransferase 4 (NMT4) from Papaver somniferum (Opium poppy).